The sequence spans 197 residues: Probable nicotinate-nucleotide adenylyltransferase (197 aa).

The protein belongs to the NadD family.

It carries out the reaction nicotinate beta-D-ribonucleotide + ATP + H(+) = deamido-NAD(+) + diphosphate. The protein operates within cofactor biosynthesis; NAD(+) biosynthesis; deamido-NAD(+) from nicotinate D-ribonucleotide: step 1/1. Catalyzes the reversible adenylation of nicotinate mononucleotide (NaMN) to nicotinic acid adenine dinucleotide (NaAD). In Porphyromonas gingivalis (strain ATCC 33277 / DSM 20709 / CIP 103683 / JCM 12257 / NCTC 11834 / 2561), this protein is Probable nicotinate-nucleotide adenylyltransferase.